Consider the following 63-residue polypeptide: Chymotrypsin/elastase isoinhibitor 1 (63 aa).

Disulfide bonds link Cys-5-Cys-38, Cys-14-Cys-33, Cys-17-Cys-29, Cys-21-Cys-60, and Cys-40-Cys-54. A TIL domain is found at 5 to 60 (CGPNEVWTECTGCEMKCGPDENTPCPLMCRRPSCECSPGRGMRRTNDGKCIPASQC).

The protein belongs to the serine protease inhibitor-like (TIL domain-containing) family.

It is found in the secreted. In terms of biological role, defends the organism against the host's proteinases. The protein is Chymotrypsin/elastase isoinhibitor 1 of Ascaris suum (Pig roundworm).